We begin with the raw amino-acid sequence, 461 residues long: CUGBP Elav-like family member 3 (461 aa).

2 RRM domains span residues isoleucine 7 to serine 88 and arginine 95 to threonine 175. Positions proline 345–glutamine 358 are enriched in pro residues. Residues proline 345 to glycine 375 are disordered. Residues glutamine 359–glutamine 369 show a composition bias toward low complexity. Residues cysteine 376 to proline 454 form the RRM 3 domain.

Belongs to the CELF/BRUNOL family.

The protein resides in the nucleus. It is found in the cytoplasm. Functionally, RNA-binding protein involved in the regulation of pre-mRNA alternative splicing. Mediates exon inclusion and/or exclusion in pre-mRNA that are subject to tissue-specific and developmentally regulated alternative splicing. Specifically activates exon 5 inclusion of cardiac isoforms of TNNT2 during heart remodeling at the juvenile to adult transition. Activates the splicing of MAPT/Tau exon 10. Binds to muscle-specific splicing enhancer (MSE) intronic sites flanking the alternative exon 5 of TNNT2 pre-mRNA. This chain is CUGBP Elav-like family member 3 (CELF3), found in Bos taurus (Bovine).